Consider the following 340-residue polypeptide: Cyclic GMP-AMP synthase-like receptor 3 (340 aa).

Residues Ser62 and 74–76 each bind ATP; that span reads EAD. Residues Glu74, Asp76, and Asp177 each coordinate Mg(2+). Residues Lys241 and 255 to 259 contribute to the ATP site; that span reads SYHLK. Mn(2+)-binding residues include Asp267 and Asp270.

Belongs to the mab-21 family. Mg(2+) is required as a cofactor. The cofactor is Mn(2+).

It carries out the reaction 2 ATP = 3',3'-c-di-AMP + 2 diphosphate. In terms of biological role, nucleotidyltransferase that catalyzes the formation of cyclic di-AMP (3',3'-c-di-AMP) from 2 molecules of ATP and plays a key role in innate immunity. Acts as a key sensor of double-stranded RNA (dsRNA), the presence of dsRNA in the cytoplasm being a danger signal that triggers the immune responses. Directly binds dsRNA, activating the nucleotidyltransferase activity, leading to synthesis of 3',3'-c-di-AMP, a second messenger that binds to and activates Sting, thereby triggering the immune response via activation of the NF-kappa-B transcription factor. The chain is Cyclic GMP-AMP synthase-like receptor 3 from Stylophora pistillata (Smooth cauliflower coral).